The following is a 216-amino-acid chain: Small ribosomal subunit protein uS3c (216 aa).

One can recognise a KH type-2 domain in the interval 43–118; it reads IKNYIQKNRR…RLKIAITRVE (76 aa).

It belongs to the universal ribosomal protein uS3 family. As to quaternary structure, part of the 30S ribosomal subunit.

Its subcellular location is the plastid. It localises to the chloroplast. The chain is Small ribosomal subunit protein uS3c (rps3) from Dioscorea elephantipes (Elephant's foot yam).